The following is a 250-amino-acid chain: Phosphoribosylaminoimidazole-succinocarboxamide synthase (250 aa).

This sequence belongs to the SAICAR synthetase family.

It carries out the reaction 5-amino-1-(5-phospho-D-ribosyl)imidazole-4-carboxylate + L-aspartate + ATP = (2S)-2-[5-amino-1-(5-phospho-beta-D-ribosyl)imidazole-4-carboxamido]succinate + ADP + phosphate + 2 H(+). It participates in purine metabolism; IMP biosynthesis via de novo pathway; 5-amino-1-(5-phospho-D-ribosyl)imidazole-4-carboxamide from 5-amino-1-(5-phospho-D-ribosyl)imidazole-4-carboxylate: step 1/2. This is Phosphoribosylaminoimidazole-succinocarboxamide synthase from Parasynechococcus marenigrum (strain WH8102).